We begin with the raw amino-acid sequence, 64 residues long: Large ribosomal subunit protein uL30 (64 aa).

Positions 1–22 (MAKAAKTIKVEQTGSAIRRHHS) are disordered.

This sequence belongs to the universal ribosomal protein uL30 family. Part of the 50S ribosomal subunit.

This Nitrobacter winogradskyi (strain ATCC 25391 / DSM 10237 / CIP 104748 / NCIMB 11846 / Nb-255) protein is Large ribosomal subunit protein uL30.